Consider the following 264-residue polypeptide: MNQVTERAVQFDVVTLFPEMFRALTDWGITSRAVKQGRFGLRTWNPRDFTTDNYRTVDDRPYGGGPGMVMLARPLEAAIGAAKAAQAEQGIASTRVVMMSPQGAPLTHERVTRMAQEPGVVVLCGRYEAIDQRLLDRCVDEEISLGDFVLSGGELPAMAMMDAVVRLLPGVLNDAQSAVQDSFVDGLLDCPHYTRPEEYEGMRVPDVLLGGHHAEIERWRRQEALRNTWRKRPDLIVRARREKLLSRADEAWLANLAREAKDAS.

Residues G125 and 145 to 150 (LGDFVL) contribute to the S-adenosyl-L-methionine site.

Belongs to the RNA methyltransferase TrmD family. Homodimer.

It is found in the cytoplasm. The catalysed reaction is guanosine(37) in tRNA + S-adenosyl-L-methionine = N(1)-methylguanosine(37) in tRNA + S-adenosyl-L-homocysteine + H(+). Specifically methylates guanosine-37 in various tRNAs. This is tRNA (guanine-N(1)-)-methyltransferase from Burkholderia multivorans (strain ATCC 17616 / 249).